The chain runs to 197 residues: Recombination protein RecR (197 aa).

The segment at 56–71 adopts a C4-type zinc-finger fold; sequence CSVCGNFDTIDPCAIC. A Toprim domain is found at 79-174; it reads SMLCVVEDVA…TVSGLAHGVP (96 aa).

Belongs to the RecR family.

In terms of biological role, may play a role in DNA repair. It seems to be involved in an RecBC-independent recombinational process of DNA repair. It may act with RecF and RecO. This is Recombination protein RecR from Paramagnetospirillum magneticum (strain ATCC 700264 / AMB-1) (Magnetospirillum magneticum).